The following is a 227-amino-acid chain: Mitochondrial cardiolipin hydrolase (227 aa).

At 1 to 14 (MDVFKQMSFKELMK) the chain is on the mitochondrial intermembrane side. The chain crosses the membrane as a helical span at residues 15–33 (VLGLGTVAFVLGVEWLNWL). Topologically, residues 34 to 227 (TRRLRDSRGP…LQSKNGQIKK (194 aa)) are cytoplasmic. Positions 153–180 (SAVHMHHKFALVDGRKLISGSLNWTLTA) constitute a PLD phosphodiesterase domain. Catalysis depends on residues H158, K160, and D165.

It belongs to the phospholipase D family. MitoPLD/Zucchini subfamily. As to quaternary structure, homodimer.

Its subcellular location is the mitochondrion outer membrane. It carries out the reaction a cardiolipin + H2O = a 1,2-diacyl-sn-glycero-3-phospho-(1'-sn-glycerol) + a 1,2-diacyl-sn-glycero-3-phosphate + H(+). In terms of biological role, presents phospholipase and nuclease activities, depending on the different physiological conditions. Plays a key role in mitochondrial fusion and fission via its phospholipase activity. In its phospholipase role, it uses the mitochondrial lipid cardiolipin as substrate to generate phosphatidate (PA or 1,2-diacyl-sn-glycero-3-phosphate), a second messenger signaling lipid. Production of PA facilitates Mitofusin-mediated fusion, whereas the cleavage of PA by the Lipin family of phosphatases produces diacylgycerol (DAG) which promotes mitochondrial fission. Regulates mitochondrial shape through facilitating mitochondrial fusion. During spermatogenesis, plays a critical role in PIWI-interacting RNA (piRNA) biogenesis. piRNAs provide essential protection against the activity of mobile genetic elements. piRNA-mediated transposon silencing is thus critical for maintaining genome stability, in particular in germline cells when transposons are mobilized as a consequence of wide-spread genomic demethylation. Has been shown to be a backbone-non-specific, single strand-specific nuclease, cleaving either RNA or DNA substrates with similar affinity. Produces 5' phosphate and 3' hydroxyl termini, suggesting it could directly participate in the processing of primary piRNA transcripts. Has been proposed to act as a cardiolipin hydrolase to generate phosphatidic acid at mitochondrial surface. Although it cannot be excluded that it can act as a phospholipase in some circumstances, this activity could not be confirmed. The protein is Mitochondrial cardiolipin hydrolase (pld6) of Danio rerio (Zebrafish).